The primary structure comprises 192 residues: MLPPALNIPKWLEANSHLLQPPVNNYCVYHPSSPATAGYTVMIVGGPNARTDYHINTTPEFFYQYRGSMLLKTVDTSVSPPVFQDIPIHEGSIFLLPANTPHCPVRFKDTVGVVMEQPRAEGAVDQMRWYCRGCGEIVWEKQFVCTDLGTQVKEVVEEFGADQEKRTCKACGTIAETRFKEGEIVQPPRFVE.

R50 is an O2 binding site. Fe cation contacts are provided by H54, E60, and H102. Position 60 (E60) interacts with substrate. The substrate site is built by R106 and E116. C131, C134, C168, and C171 together coordinate a divalent metal cation.

This sequence belongs to the 3-HAO family. Fe(2+) is required as a cofactor.

Its subcellular location is the cytoplasm. The enzyme catalyses 3-hydroxyanthranilate + O2 = (2Z,4Z)-2-amino-3-carboxymuconate 6-semialdehyde. The protein operates within cofactor biosynthesis; NAD(+) biosynthesis; quinolinate from L-kynurenine: step 3/3. In terms of biological role, catalyzes the oxidative ring opening of 3-hydroxyanthranilate to 2-amino-3-carboxymuconate semialdehyde, which spontaneously cyclizes to quinolinate. This is 3-hydroxyanthranilate 3,4-dioxygenase 1 (bna1-1) from Aspergillus clavatus (strain ATCC 1007 / CBS 513.65 / DSM 816 / NCTC 3887 / NRRL 1 / QM 1276 / 107).